Here is a 480-residue protein sequence, read N- to C-terminus: Nuclear receptor subfamily 6 group A member 1 (480 aa).

Positions 1–32 (MERDEPPPSGGGGGGGSAGFLEPPAALPPPPR) are disordered. Positions 57–132 (QRTCLICGDR…MGMNRKAIRE (76 aa)) form a DNA-binding region, nuclear receptor. The Zn(2+) site is built by C60, C63, C77, C80, C96, C102, C112, and C115. 2 consecutive NR C4-type zinc fingers follow at residues 60–80 (CLIC…CEGC) and 96–120 (CSRD…LLKC). Disordered regions lie at residues 131–150 (REDG…QISE) and 162–199 (FEEE…LSSS). Basic and acidic residues predominate over residues 165–177 (EANHWSNHGDSDH). Positions 172 to 253 (HGDSDHSSPG…RSLDPQSYSL (82 aa)) are sufficient for interaction with UIMC1. Residues 187–199 (SNQPSPGSTLSSS) show a composition bias toward low complexity. The NR LBD domain occupies 249-480 (QSYSLIHQLL…HSCKTSVGKE (232 aa)).

It belongs to the nuclear hormone receptor family. NR6 subfamily. In terms of assembly, homodimer. Interacts with UIMC1. As to expression, shows highest expression in the germ cells of the adult testis.

The protein localises to the nucleus. Functionally, orphan nuclear receptor that binds to a response element containing the sequence 5'-TCAAGGTCA-3'. Acts as a regulator of embryonic stem cell pluripotency by mediating repression of POU5F1/OCT4: binds to the DR0 element within the POU5F1/OCT4 promoter and inhibits POU5F1/OCT4 expression during embryonic stem cell differentiation. Involved in the regulation of gene expression in germ cell development during gametogenesis. This Homo sapiens (Human) protein is Nuclear receptor subfamily 6 group A member 1 (NR6A1).